A 278-amino-acid chain; its full sequence is Orotidine 5'-phosphate decarboxylase (278 aa).

The active-site Proton donor is lysine 95.

Belongs to the OMP decarboxylase family. Type 2 subfamily.

It catalyses the reaction orotidine 5'-phosphate + H(+) = UMP + CO2. Its pathway is pyrimidine metabolism; UMP biosynthesis via de novo pathway; UMP from orotate: step 2/2. This Methylibium petroleiphilum (strain ATCC BAA-1232 / LMG 22953 / PM1) protein is Orotidine 5'-phosphate decarboxylase.